The primary structure comprises 450 residues: Bifunctional protein GlmU (450 aa).

The segment at 1 to 228 (MKTALVILAA…ESETLGINSR (228 aa)) is pyrophosphorylase. Residues 8 to 11 (LAAG), K22, Q75, and 80 to 81 (GT) each bind UDP-N-acetyl-alpha-D-glucosamine. Position 105 (D105) interacts with Mg(2+). UDP-N-acetyl-alpha-D-glucosamine is bound by residues G140, E154, N169, and N226. N226 provides a ligand contact to Mg(2+). The tract at residues 229-249 (TELSAAEAAFQERARTNAFEN) is linker. Residues 250 to 450 (GVTLPAPGTV…AKKAKQQRGS (201 aa)) form an N-acetyltransferase region. Positions 315 and 333 each coordinate UDP-N-acetyl-alpha-D-glucosamine. Residue H345 is the Proton acceptor of the active site. The UDP-N-acetyl-alpha-D-glucosamine site is built by Y348 and N359. Residues A362, 368–369 (NY), S387, S405, and R422 each bind acetyl-CoA.

The protein in the N-terminal section; belongs to the N-acetylglucosamine-1-phosphate uridyltransferase family. In the C-terminal section; belongs to the transferase hexapeptide repeat family. Homotrimer. It depends on Mg(2+) as a cofactor.

Its subcellular location is the cytoplasm. It catalyses the reaction alpha-D-glucosamine 1-phosphate + acetyl-CoA = N-acetyl-alpha-D-glucosamine 1-phosphate + CoA + H(+). The enzyme catalyses N-acetyl-alpha-D-glucosamine 1-phosphate + UTP + H(+) = UDP-N-acetyl-alpha-D-glucosamine + diphosphate. It participates in nucleotide-sugar biosynthesis; UDP-N-acetyl-alpha-D-glucosamine biosynthesis; N-acetyl-alpha-D-glucosamine 1-phosphate from alpha-D-glucosamine 6-phosphate (route II): step 2/2. It functions in the pathway nucleotide-sugar biosynthesis; UDP-N-acetyl-alpha-D-glucosamine biosynthesis; UDP-N-acetyl-alpha-D-glucosamine from N-acetyl-alpha-D-glucosamine 1-phosphate: step 1/1. Its pathway is bacterial outer membrane biogenesis; LPS lipid A biosynthesis. In terms of biological role, catalyzes the last two sequential reactions in the de novo biosynthetic pathway for UDP-N-acetylglucosamine (UDP-GlcNAc). The C-terminal domain catalyzes the transfer of acetyl group from acetyl coenzyme A to glucosamine-1-phosphate (GlcN-1-P) to produce N-acetylglucosamine-1-phosphate (GlcNAc-1-P), which is converted into UDP-GlcNAc by the transfer of uridine 5-monophosphate (from uridine 5-triphosphate), a reaction catalyzed by the N-terminal domain. The sequence is that of Bifunctional protein GlmU from Roseobacter denitrificans (strain ATCC 33942 / OCh 114) (Erythrobacter sp. (strain OCh 114)).